Reading from the N-terminus, the 251-residue chain is Triosephosphate isomerase (251 aa).

9–11 (NWK) is a substrate binding site. The active-site Electrophile is the His94. Glu166 (proton acceptor) is an active-site residue. Substrate is bound by residues Gly172, Ser211, and 232–233 (GG).

Belongs to the triosephosphate isomerase family. Homodimer.

The protein localises to the cytoplasm. It catalyses the reaction D-glyceraldehyde 3-phosphate = dihydroxyacetone phosphate. The protein operates within carbohydrate biosynthesis; gluconeogenesis. It participates in carbohydrate degradation; glycolysis; D-glyceraldehyde 3-phosphate from glycerone phosphate: step 1/1. Functionally, involved in the gluconeogenesis. Catalyzes stereospecifically the conversion of dihydroxyacetone phosphate (DHAP) to D-glyceraldehyde-3-phosphate (G3P). The chain is Triosephosphate isomerase from Stenotrophomonas maltophilia (strain K279a).